Consider the following 298-residue polypeptide: MKAENIQLGIAPIGWTNDDLPELGAENTFEQCVSEMALAGYTGCEVGNKYPRDVAVLKHKLDVRGIQICNAWFSTFFVDGKREETIQEFIKHRDFLHAMGAKVIGCSEQSRSIQGTTKAVFKEKPIFNDEDWQRLAEGYNELAKLAAEKGMKVSLHHHMGTGIQTPEEVDRYMSVVNDDVYLLFDSGHLYYSEGCQKAMLAVLEKYIHRIVHVHLKDVRDEVVAEVKAKDLSFLEGVKKGTFTVPGDGVIDFKPIFDILEKYDYKGWMVVEAEQDPALANPFEYALKGRKYIREVAGV.

Belongs to the IolE/MocC family. Glutathione serves as cofactor. Requires Co(2+) as cofactor. The cofactor is Mn(2+).

It catalyses the reaction scyllo-inosose = 3D-3,5/4-trihydroxycyclohexane-1,2-dione + H2O. In terms of biological role, catalyzes the dehydration of inosose (2-keto-myo-inositol, 2KMI or 2,4,6/3,5-pentahydroxycyclohexanone) to 3D-(3,5/4)-trihydroxycyclohexane-1,2-dione (D-2,3-diketo-4-deoxy-epi-inositol). The chain is Inosose dehydratase from Glaesserella parasuis serovar 5 (strain SH0165) (Haemophilus parasuis).